Consider the following 506-residue polypeptide: Ribose import ATP-binding protein RbsA (506 aa).

ABC transporter domains follow at residues 5–241 (LALT…VGRR) and 254–498 (RDAA…TSDV). 37 to 44 (GENGAGKS) provides a ligand contact to ATP.

It belongs to the ABC transporter superfamily. Ribose importer (TC 3.A.1.2.1) family. In terms of assembly, the complex is composed of an ATP-binding protein (RbsA), two transmembrane proteins (RbsC) and a solute-binding protein (RbsB).

It localises to the cell inner membrane. It carries out the reaction D-ribose(out) + ATP + H2O = D-ribose(in) + ADP + phosphate + H(+). Functionally, part of the ABC transporter complex RbsABC involved in ribose import. Responsible for energy coupling to the transport system. The protein is Ribose import ATP-binding protein RbsA of Burkholderia mallei (strain ATCC 23344).